We begin with the raw amino-acid sequence, 419 residues long: MTTQLEQAWELAKQRFAAVGIDVEEALRQLDRLPVSMHCWQGDDVSGFENPEGSLTGGIQATGNYPGKARNASELRADLEQAMRLIPGPKRLNLHAIYLESDTPVSRDQIKPEHFKNWVEWAKANQLGLDFNPSCFSHPLSADGFTLSHADDSIRQFWIDHCKASRRVSAYFGEQLGTPSVMNIWIPDGMKDITVDRLAPRQRLLAALDEVISEKLDPAHHIDAVESKLFGIGAESYTVGSNEFYMGYATSRQTALCLDAGHFHPTEVISDKISAAMLYVPQLLLHVSRPVRWDSDHVVLLDDETQAIASEIVRHDLFDRVHIGLDFFDASINRIAAWVIGTRNMKKALLRALLEPTTELRKLEAAGDYTARLALLEEQKSLPWQAVWEMYCQRHDTPVGSEWLESVRAYEKAILSQRG.

Residues H262, D294, and D296 each contribute to the Mn(2+) site.

The protein belongs to the rhamnose isomerase family. As to quaternary structure, homotetramer. Mn(2+) is required as a cofactor.

It is found in the cytoplasm. It carries out the reaction L-rhamnopyranose = L-rhamnulose. The protein operates within carbohydrate degradation; L-rhamnose degradation; glycerone phosphate from L-rhamnose: step 1/3. Functionally, catalyzes the interconversion of L-rhamnose and L-rhamnulose. This is L-rhamnose isomerase from Escherichia coli (strain SMS-3-5 / SECEC).